Reading from the N-terminus, the 137-residue chain is MAMVNTTTRLSDDALAFLSERHLAMLTTLRADNSPHVVAVGFTFDPKTHIARVITTGGSQKAVNADRSGLAVLSQVDGARWLSLEGRAAVNSDIDAVRDAELRYAQRYRTPRPNPRRVVIEVQIERVLGSADLLDRA.

Residues histidine 36–glycine 41, isoleucine 54–threonine 55, glutamine 60–lysine 61, arginine 67, and glycine 78–tryptophan 81 each bind coenzyme F420-(gamma-Glu)n.

This sequence belongs to the F420H(2)-dependent biliverdin reductase family. In terms of assembly, homodimer.

Its subcellular location is the cell surface. It localises to the secreted. The enzyme catalyses (4Z,15Z)-bilirubin IXalpha + oxidized coenzyme F420-(gamma-L-Glu)(n) + H(+) = biliverdin IXalpha + reduced coenzyme F420-(gamma-L-Glu)(n). Functionally, catalyzes the F420H(2)-dependent reduction of biliverdin-IXalpha at C10 position, leading to bilirubin-IXalpha, a potent antioxidant. As biliverdin-IXalpha is produced in high amounts in macrophages infected with M.tuberculosis, its reduction by Rv2074 may play a role in protecting mycobacteria against oxidative stress, aiding the persistence of M.tuberculosis infection. This chain is F420H(2)-dependent biliverdin reductase, found in Mycobacterium tuberculosis (strain CDC 1551 / Oshkosh).